The chain runs to 109 residues: Thioredoxin (109 aa).

Residues 2–109 form the Thioredoxin domain; the sequence is ETLLWKDARE…LVEKIKELFK (108 aa). C27 and C30 are disulfide-bonded.

This sequence belongs to the thioredoxin family.

Participates in various redox reactions through the reversible oxidation of its active center dithiol to a disulfide and catalyzes dithiol-disulfide exchange reactions. This is Thioredoxin (trxA) from Mycoplasmopsis pulmonis (strain UAB CTIP) (Mycoplasma pulmonis).